A 345-amino-acid polypeptide reads, in one-letter code: Small ribosomal subunit biogenesis GTPase RsgA (345 aa).

Residues 1 to 36 (MSKNKLSKGQERRVQANHQRRLQQRERGAAHWDDQP) are disordered. The span at 23–34 (QQRERGAAHWDD) shows a compositional bias: basic and acidic residues. Residues 103 to 273 (RSVLTRPDVY…LIDSPGVREL (171 aa)) form the CP-type G domain. GTP-binding positions include 159–162 (NKID) and 213–221 (GQSGVGKSS). Residues C297, C302, H304, and C310 each coordinate Zn(2+).

It belongs to the TRAFAC class YlqF/YawG GTPase family. RsgA subfamily. Monomer. Associates with 30S ribosomal subunit, binds 16S rRNA. It depends on Zn(2+) as a cofactor.

It localises to the cytoplasm. Its function is as follows. One of several proteins that assist in the late maturation steps of the functional core of the 30S ribosomal subunit. Helps release RbfA from mature subunits. May play a role in the assembly of ribosomal proteins into the subunit. Circularly permuted GTPase that catalyzes slow GTP hydrolysis, GTPase activity is stimulated by the 30S ribosomal subunit. The polypeptide is Small ribosomal subunit biogenesis GTPase RsgA (Sodalis glossinidius (strain morsitans)).